Consider the following 306-residue polypeptide: Probable thioesterase atnL (306 aa).

It belongs to the lcsJ thioesterase family.

Part of the gene cluster that mediates the biosynthesis of aspercryptins, linear lipopeptides built from six amino acids including 2 highly unusual and nonproteogenic amino acids, 2-amino-octanoic acid (2aoa) and 2-amino-dodecanol (2adol). The core structure of aspercryptins is as follows: Ser/Ala-Thr-Ile/Val-2aoa-Asn-2adol. The first step of aspercryptin biosynthesis is the generation of the fatty acid precursors, octanoic and dodecanoic acids, by the FAS subunits atnF and atnM. The fatty acid precursors are likely transformed into the corresponding alpha-amino fatty acids in three steps. First, they are hydroxylated by the cytochrome P450 monooxygenase atnE, then oxidized to the corresponding alpha-keto acids by the NAD(P)-dependent oxidoreductase atnD, and finally converted to the alpha-amino fatty acids by the PLP-dependent aminotransferases atnH or atnJ. the alpha-amino fatty acids, 2-amino-octanoic and 2-amino-dodecanoic acids, are recognized, activated, and covalently tethered to the NRPS atnA by its fourth and sixth adenylation domains. The second module of atnA is the Thr module and contains an epimerase (E) domain responsible for the epimerization of Thr to D-allo-Thr. Additionally, despite atnA having only one epimerase domain, the first amino acid of aspercryptin A1 is D-Ser, suggesting that serine is either loaded directly as D-Ser on the first module or that the epimerase domain in the threonine module epimerizes both L-Ser and L-Thr. After condensation of the hexapeptide of aspercryptin, the C-terminal reductase (TE) domain might be involved in the reductive release and production of the aldehyde hexapeptide. Further reduction would generate aspercryptins. The variety of aspercryptins produced reflects the flexibility of the atnA NRPS, allowing incorporation of alanine instead of serine, valine for isoleucine, and a C10 fatty amino alcohol instead of the C12 version. AtnB seems to be involved in the selectivity for Ile versus Val by the third module. Moreover, type B, C and D aspercryptins have an additional N-terminal cichorine, acetyl and propionyl group respectively. This Emericella nidulans (strain FGSC A4 / ATCC 38163 / CBS 112.46 / NRRL 194 / M139) (Aspergillus nidulans) protein is Probable thioesterase atnL.